The sequence spans 505 residues: 2-isopropylmalate synthase (505 aa).

The Pyruvate carboxyltransferase domain occupies 5–269 (IKIFDTTLRD…ETGIHTEYLY (265 aa)). Residues Asp-14, His-204, His-206, and Asn-240 each coordinate Mn(2+). The interval 393 to 505 (SLLYFHTFTG…AVNRFELRKR (113 aa)) is regulatory domain.

This sequence belongs to the alpha-IPM synthase/homocitrate synthase family. LeuA type 1 subfamily. In terms of assembly, homodimer. Mn(2+) serves as cofactor.

Its subcellular location is the cytoplasm. It carries out the reaction 3-methyl-2-oxobutanoate + acetyl-CoA + H2O = (2S)-2-isopropylmalate + CoA + H(+). It functions in the pathway amino-acid biosynthesis; L-leucine biosynthesis; L-leucine from 3-methyl-2-oxobutanoate: step 1/4. In terms of biological role, catalyzes the condensation of the acetyl group of acetyl-CoA with 3-methyl-2-oxobutanoate (2-ketoisovalerate) to form 3-carboxy-3-hydroxy-4-methylpentanoate (2-isopropylmalate). In Sediminispirochaeta smaragdinae (strain DSM 11293 / JCM 15392 / SEBR 4228) (Spirochaeta smaragdinae), this protein is 2-isopropylmalate synthase.